The following is a 371-amino-acid chain: Bifunctional chorismate mutase/prephenate dehydratase (371 aa).

Residues 1 to 92 (MTLKNALLAF…DSVLTQKKWI (92 aa)) form the Chorismate mutase domain. R11, R28, K39, D48, E52, S84, and Q88 together coordinate substrate. Residues 104 to 284 (KISFLGSFGS…NITQFIILAQ (181 aa)) enclose the Prephenate dehydratase domain. The regulatory stretch occupies residues 285 to 371 (KKTYITNKKT…IKCIKILGCF (87 aa)).

It is found in the cytoplasm. It carries out the reaction chorismate = prephenate. The catalysed reaction is prephenate + H(+) = 3-phenylpyruvate + CO2 + H2O. The protein operates within amino-acid biosynthesis; L-phenylalanine biosynthesis; phenylpyruvate from prephenate: step 1/1. It functions in the pathway metabolic intermediate biosynthesis; prephenate biosynthesis; prephenate from chorismate: step 1/1. Its function is as follows. Catalyzes the Claisen rearrangement of chorismate to prephenate and the decarboxylation/dehydration of prephenate to phenylpyruvate. The polypeptide is Bifunctional chorismate mutase/prephenate dehydratase (pheA) (Buchnera aphidicola subsp. Baizongia pistaciae (strain Bp)).